The following is a 620-amino-acid chain: Rhamnogalacturonan endolyase YesW (620 aa).

A signal peptide spans 1 to 37 (MRRSCLMIRRRKRMFTAVTLLVLLVMGTSVCPVKAEG). Residues 133-152 (LDKPAGGTTPKGESYTYSAN) form a disordered region. N152 contacts substrate. Ca(2+) is bound by residues D153, D158, D160, D162, Q164, and E166. D172 contributes to the substrate binding site. 2 residues coordinate a carbohydrate: D187 and K207. Positions 222, 224, 226, 228, and 230 each coordinate Ca(2+). The a carbohydrate site is built by G238 and R255. Ca(2+)-binding residues include H363, D369, D371, D373, K375, E377, D386, H387, H399, D401, D407, D409, R412, G414, E416, and E422. R452 is a substrate binding site. Residues D457, D459, Y462, G464, E466, D496, D498, L500, and E502 each contribute to the Ca(2+) site. 532–534 (NGT) provides a ligand contact to substrate. Ca(2+)-binding residues include D543, L545, D547, R549, E551, N592, and A594. Y595 provides a ligand contact to substrate. N596 is a Ca(2+) binding site.

It belongs to the polysaccharide lyase 11 family. Monomer. Requires Ca(2+) as cofactor. It depends on Mn(2+) as a cofactor.

It localises to the secreted. It catalyses the reaction Endotype eliminative cleavage of L-alpha-rhamnopyranosyl-(1-&gt;4)-alpha-D-galactopyranosyluronic acid bonds of rhamnogalacturonan I domains in ramified hairy regions of pectin leaving L-rhamnopyranose at the reducing end and 4-deoxy-4,5-unsaturated D-galactopyranosyluronic acid at the non-reducing end.. In terms of biological role, pectinolytic enzyme that degrades type I rhamnogalacturonan from plant cell walls and releases oligosaccharide products. Degrades rhamnogalacturonan, polygalacturonic acid, pectic acid and pectin. In Bacillus subtilis (strain 168), this protein is Rhamnogalacturonan endolyase YesW (yesW).